The chain runs to 282 residues: MGIESPTASSYIKHHLQNLTYGQHPDGTWGLAHDAKEAADMGFWAIHVDTMAISIALGFLFLWLFRKAAKKISADTPSGLQNFVELMVEFVDGSVKETFHGKSKVIAPLALTIFVWVFLMNFMDLIPVDFLPATAQWIGVTLFGADPHHVYFKFVPTTDINATLGMSLSVFVLIVFYSIKVKGISGFVGELTLQPFGKWMIPFNLLLEGVGLLAKPVSLALRLFGNLYAGELIFILIAILPWGVQWALSVPWAIFHILIIVLQAFIFMMLTIVYLSMAHENH.

5 helical membrane passes run 45–65 (AIHV…LWLF), 106–126 (IAPL…MDLI), 160–179 (INAT…FYSI), 232–252 (LIFI…SVPW), and 253–273 (AIFH…LTIV).

The protein belongs to the ATPase A chain family. F-type ATPases have 2 components, CF(1) - the catalytic core - and CF(0) - the membrane proton channel. CF(1) has five subunits: alpha(3), beta(3), gamma(1), delta(1), epsilon(1). CF(0) has three main subunits: a(1), b(2) and c(9-12). The alpha and beta chains form an alternating ring which encloses part of the gamma chain. CF(1) is attached to CF(0) by a central stalk formed by the gamma and epsilon chains, while a peripheral stalk is formed by the delta and b chains.

It localises to the cell inner membrane. In terms of biological role, key component of the proton channel; it plays a direct role in the translocation of protons across the membrane. This is ATP synthase subunit a from Marinomonas sp. (strain MWYL1).